Consider the following 373-residue polypeptide: Trifolitoxin-processing protein TfxB (373 aa).

It to E.coli McbC which is involved in the processing of microcin B17 (MCCB17).

It localises to the cytoplasm. In terms of biological role, the actions of the proteins TfxB, TfxD and TfxF are implicated in the processing of the inactive trifolitoxin (TfxA) precursor into the active peptide. The sequence is that of Trifolitoxin-processing protein TfxB (tfxB) from Rhizobium leguminosarum bv. trifolii.